The sequence spans 342 residues: L-threonine 3-dehydrogenase (342 aa).

Position 38 (Cys38) interacts with Zn(2+). Catalysis depends on charge relay system residues Thr40 and His43. His63, Glu64, Cys93, Cys96, Cys99, and Cys107 together coordinate Zn(2+). Residues Ile175, Asp195, Arg200, 262-264 (LGL), and 286-287 (IY) each bind NAD(+).

The protein belongs to the zinc-containing alcohol dehydrogenase family. As to quaternary structure, homotetramer. It depends on Zn(2+) as a cofactor.

It is found in the cytoplasm. It catalyses the reaction L-threonine + NAD(+) = (2S)-2-amino-3-oxobutanoate + NADH + H(+). It participates in amino-acid degradation; L-threonine degradation via oxydo-reductase pathway; glycine from L-threonine: step 1/2. Functionally, catalyzes the NAD(+)-dependent oxidation of L-threonine to 2-amino-3-ketobutyrate. In Streptomyces coelicolor (strain ATCC BAA-471 / A3(2) / M145), this protein is L-threonine 3-dehydrogenase.